The chain runs to 408 residues: Formate-dependent phosphoribosylglycinamide formyltransferase (408 aa).

Residues 25-26 (EL) and E85 contribute to the N(1)-(5-phospho-beta-D-ribosyl)glycinamide site. Residues R118, K159, 164–169 (SSGKGQ), 199–202 (EAFV), and E207 contribute to the ATP site. An ATP-grasp domain is found at 123 to 318 (KLAAEELGLP…EFELHAKAIL (196 aa)). The Mg(2+) site is built by E277 and E289. N(1)-(5-phospho-beta-D-ribosyl)glycinamide contacts are provided by residues D296, K365, and 372–373 (RR).

The protein belongs to the PurK/PurT family. As to quaternary structure, homodimer.

The enzyme catalyses N(1)-(5-phospho-beta-D-ribosyl)glycinamide + formate + ATP = N(2)-formyl-N(1)-(5-phospho-beta-D-ribosyl)glycinamide + ADP + phosphate + H(+). It participates in purine metabolism; IMP biosynthesis via de novo pathway; N(2)-formyl-N(1)-(5-phospho-D-ribosyl)glycinamide from N(1)-(5-phospho-D-ribosyl)glycinamide (formate route): step 1/1. Involved in the de novo purine biosynthesis. Catalyzes the transfer of formate to 5-phospho-ribosyl-glycinamide (GAR), producing 5-phospho-ribosyl-N-formylglycinamide (FGAR). Formate is provided by PurU via hydrolysis of 10-formyl-tetrahydrofolate. This Corynebacterium glutamicum (strain R) protein is Formate-dependent phosphoribosylglycinamide formyltransferase.